Reading from the N-terminus, the 182-residue chain is Adenine phosphoribosyltransferase (182 aa).

It belongs to the purine/pyrimidine phosphoribosyltransferase family. Homodimer.

It is found in the cytoplasm. It catalyses the reaction AMP + diphosphate = 5-phospho-alpha-D-ribose 1-diphosphate + adenine. Its pathway is purine metabolism; AMP biosynthesis via salvage pathway; AMP from adenine: step 1/1. In terms of biological role, catalyzes a salvage reaction resulting in the formation of AMP, that is energically less costly than de novo synthesis. In Campylobacter concisus (strain 13826), this protein is Adenine phosphoribosyltransferase.